Consider the following 357-residue polypeptide: MGPLRLLPTAVLLLAQAAPWEASQHCGRLEYWNPDNRCCGSCLQRFGPPPCADLEFSENCGLDDAGNHVMHPFQECPPGQCNRNSAELCSLCGGGATAPIPSGSRGGTGRPCREPVPNKEPCPLTPGKSSILSSQEPSSPGIPSVSWTSEHKAPQQAWPSLSFALFLVLVLLVTSAIILLALQRHHRRLDQGKAVQHPYPSLVCSDLDTHTRFLHLSSPASLETSEARDSWKEVSLSPLLGREMPSLESQPLSRLLDELEVLEELILLLDPEPGPGGRMACGTTRHLAARYGLPAAWSTFAYSLRPSRSPLRALIEMVVAREPSASLGQLGTHLAQIGRADALQVLSKLGSSGACLA.

The signal sequence occupies residues 1-22; it reads MGPLRLLPTAVLLLAQAAPWEA. Residues 23–160 lie on the Extracellular side of the membrane; it reads SQHCGRLEYW…HKAPQQAWPS (138 aa). The tract at residues 100 to 147 is disordered; that stretch reads IPSGSRGGTGRPCREPVPNKEPCPLTPGKSSILSSQEPSSPGIPSVSW. Residues 129–139 are compositionally biased toward low complexity; the sequence is SSILSSQEPSS. Residues 161 to 181 traverse the membrane as a helical segment; it reads LSFALFLVLVLLVTSAIILLA. The Cytoplasmic portion of the chain corresponds to 182 to 357; sequence LQRHHRRLDQ…KLGSSGACLA (176 aa).

Its subcellular location is the cell membrane. Probable cell membrane receptor for the IGF-like family protein IGFL. This Bos taurus (Bovine) protein is IGF-like family receptor 1 (IGFLR1).